The following is a 1846-amino-acid chain: Brefeldin A-inhibited guanine nucleotide-exchange protein 1 (1846 aa).

A DCB; DCB:DCB domain and DCB:HUS domain interaction region spans residues 2 to 224; the sequence is YEGKKTKNMF…QEAKQMERER (223 aa). Ser52 bears the Phosphoserine mark. Disordered regions lie at residues 216-249, 264-304, and 347-410; these read EAKQ…LRYL, DLEP…ATAA, and ISAS…SPGA. A compositionally biased stretch (basic and acidic residues) spans 264-277; sequence DLEPQTHDVDKSLQ. A phosphoserine mark is found at Ser286, Ser289, and Ser290. Composition is skewed to polar residues over residues 348–357 and 391–406; these read SASTEGNTGT and SVSS…SSGP. 2 positions are modified to phosphoserine: Ser394 and Ser407. The interval 554–574 is HUS; DCB:HUS domain interaction; the sequence is ADAQSVVDIYVNYDCDLNAAN. The interval 631 to 684 is disordered; it reads PNSQTTLGQEKPSEQEISEVKHPETINRYGSLNSLESTSSSGIGSYSTQMSGTD. A compositionally biased stretch (basic and acidic residues) spans 641–655; that stretch reads KPSEQEISEVKHPET. A compositionally biased stretch (low complexity) spans 661-681; that stretch reads SLNSLESTSSSGIGSYSTQMS. An SEC7 domain is found at 688 to 877; the sequence is QFEVLKQQKE…SAIYNEIAGK (190 aa). The Nuclear localization signal (NLS) motif lies at 708–712; that stretch reads KKPKR. A phosphoserine mark is found at Ser1076, Ser1563, and Ser1566.

As to quaternary structure, homodimer. Interacts with ARFGEF2/BIG2; both proteins are probably part of the same or very similar macromolecular complexes. Interacts with FKBP2. Interacts with MYO9B. Interacts with PRKAR1A and PRKAR2A. Interacts with PPP1CC. Interacts with NCL, FBL, NUP62 and U3 small nucleolar RNA. Interacts with DPY30. Interacts with PDE3A. Interacts with KANK1. Interacts with TBC1D22A and TBC1D22B. Phosphorylated. In vitro phosphorylated by PKA reducing its GEF activity and dephosphorylated by phosphatase PP1.

Its subcellular location is the cytoplasm. The protein localises to the perinuclear region. The protein resides in the golgi apparatus. It localises to the trans-Golgi network. It is found in the nucleus. Its subcellular location is the nucleolus. The protein localises to the nucleus matrix. The protein resides in the membrane. Its activity is regulated as follows. Inhibited by brefeldin A. Functionally, promotes guanine-nucleotide exchange on ARF1 and ARF3. Promotes the activation of ARF1/ARF3 through replacement of GDP with GTP. Involved in vesicular trafficking. Required for the maintenance of Golgi structure; the function may be independent of its GEF activity. Required for the maturation of integrin beta-1 in the Golgi. Involved in the establishment and persistence of cell polarity during directed cell movement in wound healing. Proposed to act as A kinase-anchoring protein (AKAP) and may mediate crosstalk between Arf and PKA pathways. Inhibits GAP activity of MYO9B probably through competitive RhoA binding. The function in the nucleus remains to be determined. This chain is Brefeldin A-inhibited guanine nucleotide-exchange protein 1 (Arfgef1), found in Mus musculus (Mouse).